Reading from the N-terminus, the 576-residue chain is Zinc finger protein 791 (576 aa).

The KRAB domain occupies 4 to 90; that stretch reads VAFEDVSVSF…AENFSPNLSV (87 aa). 17 C2H2-type zinc fingers span residues 100–122, 132–154, 160–182, 188–210, 216–238, 244–266, 272–294, 300–322, 328–350, 356–378, 384–406, 412–434, 440–462, 468–490, 496–518, 524–546, and 552–574; these read YECT…MRSH, YKCK…ERSH, YKCK…ERTH, YECK…ERIH, YECK…ERTH, YACK…MITH, YKCK…ERIH, YKCK…VRVH, YECK…KRNH, YECK…MITH, YKCR…ERTH, YECK…KRTH, YECK…MRMH, YKCK…TRIH, and LECK…MRMH.

It belongs to the krueppel C2H2-type zinc-finger protein family.

The protein resides in the nucleus. Its function is as follows. May be involved in transcriptional regulation. This chain is Zinc finger protein 791 (ZNF791), found in Homo sapiens (Human).